We begin with the raw amino-acid sequence, 471 residues long: Histone deacetylase 6 (471 aa).

Met-1 carries the post-translational modification N-acetylmethionine. The tract at residues 20 to 333 (RVSYFYEPTI…WCYETAVAVG (314 aa)) is histone deacetylase. The active-site Proton donor/acceptor is the His-153. Residues Asp-188, His-190, and Asp-276 each contribute to the Zn(2+) site. Residues 389 to 471 (PSVQFQHTPP…PEPDVNPPSS (83 aa)) form a disordered region. Residues 453–463 (GEDEMDDDNPE) are compositionally biased toward acidic residues.

This sequence belongs to the histone deacetylase family. HD type 1 subfamily. Interacts with Coi1, which functions in an SCF complex that recruits regulators for ubiquitination. Interacts with AHL22. Interacts with AS1. Part of the AS1 repressor complex composed of AS1, LBD6/AS2 and HDA6. Binds to EBS and SHL. Interacts with MBD6. Interacts with HDA5. Interacts with FLD. Zn(2+) serves as cofactor. As to expression, not detected in leaves, stems, flowers and young siliques.

The protein resides in the nucleus. It is found in the nucleolus. It carries out the reaction N(6)-acetyl-L-lysyl-[histone] + H2O = L-lysyl-[histone] + acetate. Its activity is regulated as follows. Inhibited by trichostatin A. Responsible for the deacetylation of lysine residues on the N-terminal part of the core histones (H2A, H2B, H3 and H4). Might remove acetyl residues only from specific targets, such as rDNA repeats or complex transgenes. Histone deacetylation gives a tag for epigenetic repression and plays an important role in transcriptional regulation, cell cycle progression and developmental events. Histone deacetylases act via the formation of large multiprotein complexes. Required for rRNA gene silencing in nucleolar dominance. Plays a role in transgene silencing, but this effect seems to bee independent of the histone deacetylase activity. Part of the AS1 repressor complex to regulate the KNOX expression in leaf development. Binds to KNAT1, KNAT2, and KNATM chromatin. Involved in the regulation of flowering time. Forms a histone deacetylase complex with HDA5, FLD and MSI4/FVE that represses FLC gene expression to control flowering time. The sequence is that of Histone deacetylase 6 from Arabidopsis thaliana (Mouse-ear cress).